The following is a 180-amino-acid chain: Large ribosomal subunit protein uL5c (180 aa).

Belongs to the universal ribosomal protein uL5 family. As to quaternary structure, part of the 50S ribosomal subunit; contacts the 5S rRNA.

The protein resides in the plastid. The protein localises to the chloroplast. Its function is as follows. Binds 5S rRNA, forms part of the central protuberance of the 50S subunit. This is Large ribosomal subunit protein uL5c (rpl5) from Oedogonium cardiacum (Filamentous green alga).